The primary structure comprises 402 residues: 26S proteasome regulatory subunit 8 (402 aa).

Gly-186–Thr-193 provides a ligand contact to ATP.

The protein belongs to the AAA ATPase family.

It is found in the cytoplasm. Its subcellular location is the nucleus. In terms of biological role, the 26S proteasome is involved in the ATP-dependent degradation of ubiquitinated proteins. The regulatory (or ATPase) complex confers ATP dependency and substrate specificity to the 26S complex. This is 26S proteasome regulatory subunit 8 from Manduca sexta (Tobacco hawkmoth).